Here is a 368-residue protein sequence, read N- to C-terminus: ASTRA-associated protein 1 (368 aa).

WD repeat units follow at residues 12–50 (GHSSSVTSVLFDANEYLYSGDEAGFVICWCLTSMRPKCA), 53–91 (AHTKTILGMQIVKGGALCTHGRDCRLVTWKIDFNCMTDN), 246–283 (SHSQPVLSVEYAGSKLFSTGADDCICLHPTPSSIADDL), 294–333 (TKHCGQQNIRIRSDNKILATAGWDGRGRVYSCQTLAPLAV), and 336–368 (YHSDGINSLAFHPGSNVIALASKDTRISLWKLY).

Belongs to the WD repeat ASA1 family. In terms of assembly, component of the ASTRA chromatin-remodeling machinery complex.

The protein localises to the cytoplasm. It localises to the nucleus. Its function is as follows. Component of the ASTRA complex probably involved in chromatin remodeling. This Schizosaccharomyces pombe (strain 972 / ATCC 24843) (Fission yeast) protein is ASTRA-associated protein 1 (asa1).